Here is a 216-residue protein sequence, read N- to C-terminus: MIVSTKLQDHFDKITKILSGFGVEGCISYGEITFSIRDQRDIHLILKKLKKEYLFEQLTDVTAVDYLTYGQSDWQVGKVVSQTGFSRGRQQDFKTAAVDNRFEIIYQLLSMANNVRIRVKCKLKDAQIILVDSVSDLWPSANWAEREVYDMFGIYFNNHPDLRRVLTDYGFVGHPLRKDFPQTGYVEMRYDENLGRVVYEPVEIDDRVNTPRVIRN.

This sequence belongs to the complex I 30 kDa subunit family. In terms of assembly, NDH-1 is composed of 14 different subunits. Subunits NuoB, C, D, E, F, and G constitute the peripheral sector of the complex.

The protein resides in the cell inner membrane. It catalyses the reaction a quinone + NADH + 5 H(+)(in) = a quinol + NAD(+) + 4 H(+)(out). Functionally, NDH-1 shuttles electrons from NADH, via FMN and iron-sulfur (Fe-S) centers, to quinones in the respiratory chain. The immediate electron acceptor for the enzyme in this species is believed to be ubiquinone. Couples the redox reaction to proton translocation (for every two electrons transferred, four hydrogen ions are translocated across the cytoplasmic membrane), and thus conserves the redox energy in a proton gradient. This Francisella tularensis subsp. tularensis (strain FSC 198) protein is NADH-quinone oxidoreductase subunit C.